We begin with the raw amino-acid sequence, 149 residues long: Transcriptional repressor NrdR (149 aa).

A zinc finger lies at Cys-3–Cys-34. The region spanning Pro-49 to Glu-139 is the ATP-cone domain.

This sequence belongs to the NrdR family. Zn(2+) serves as cofactor.

Its function is as follows. Negatively regulates transcription of bacterial ribonucleotide reductase nrd genes and operons by binding to NrdR-boxes. This chain is Transcriptional repressor NrdR, found in Polaromonas sp. (strain JS666 / ATCC BAA-500).